A 1130-amino-acid chain; its full sequence is Sterol regulatory element-binding protein 2 (1130 aa).

Residues 1–50 are transcriptional activation (acidic); the sequence is MDESSELGVLETMETLTELGDELTLGDIDEMLQFVSNQVGEFPDLFSEQL. Over 1–470 the chain is Cytoplasmic; that stretch reads MDESSELGVL…VALGMVDRSR (470 aa). Residues 53-133 are disordered; sequence SFPGGGSNGG…PQPQPQPPAQ (81 aa). Gly residues predominate over residues 55–64; sequence PGGGSNGGSG. Over residues 83-93 the composition is skewed to polar residues; the sequence is RSFSQVPLSTF. Low complexity predominate over residues 94–104; that stretch reads SPSAASPQAPA. The span at 111–131 shows a compositional bias: pro residues; the sequence is PTPPRATPVLQPRPQPQPQPP. Residues 226–480 form an interaction with LMNA region; that stretch reads QQVPVLVQPQ…ILLCVLTFLG (255 aa). The bHLH domain maps to 319–369; it reads ERRTTHNIIEKRYRSSINDKIIELKDLVMGTDAKMHKSGVLRKAIDYIKYL. Positions 369–390 are leucine-zipper; it reads LQQVNHKLRQENMVLKLANQKN. A Glycyl lysine isopeptide (Lys-Gly) (interchain with G-Cter in SUMO2) cross-link involves residue Lys453. Residues 471–491 form a helical membrane-spanning segment; sequence ILLCVLTFLGLSFNPLTSLLQ. Residues 492-522 lie on the Lumenal side of the membrane; that stretch reads WGGAHNTDQHPYSGSGRSVLSLESGAGGWFD. The chain crosses the membrane as a helical span at residues 523-543; sequence WMVPTLLLWLVNGVIVLSVFV. The Cytoplasmic segment spans residues 544–1130; sequence KLLVHGEPVI…LGGGTAIAAS (587 aa). Phosphoserine is present on Ser1087.

Belongs to the SREBP family. Forms a tight complex with SCAP, the SCAP-SREBP complex, in the endoplasmic reticulum membrane and the Golgi apparatus. Interacts with PAQR3; the interaction anchors the SCAP-SREBP complex to the Golgi apparatus in low cholesterol conditions. Interacts (via C-terminal domain) with RNF139. In terms of assembly, homodimer; efficient DNA binding of the soluble transcription factor fragment requires dimerization with another bHLH protein. Interacts with LMNA. In terms of processing, processed in the Golgi apparatus, releasing the protein from the membrane. At low cholesterol the SCAP-SREBP complex is recruited into COPII vesicles for export from the endoplasmic reticulum. In the Golgi, complex SREBPs are cleaved sequentially by site-1 (MBTPS1, S1P) and site-2 (MBTPS2, S2P) proteases. The first cleavage by site-1 protease occurs within the luminal loop, the second cleavage by site-2 protease occurs within the first transmembrane domain, releasing the transcription factor from the Golgi membrane. Apoptosis triggers cleavage by the cysteine proteases caspase-3 and caspase-7. Cleavage and activation is induced by mediated cholesterol efflux. Phosphorylated by AMPK, leading to suppress protein processing and nuclear translocation, and repress target gene expression. Post-translationally, SCAP-free SREBF2 is ubiquitinated by the BCR(ARMC5) complex, leading to its degradation. In terms of processing, ubiquitinated; the nuclear form has a rapid turnover and is rapidly ubiquitinated and degraded by the proteasome in the nucleus.

It is found in the endoplasmic reticulum membrane. The protein localises to the golgi apparatus membrane. It localises to the cytoplasmic vesicle. The protein resides in the COPII-coated vesicle membrane. Its subcellular location is the nucleus. Activation by cleavage is down-regulated upon activation of SIRT3-dependent PRKAA1/AMPK-alpha signaling cascade which leads to inhibition of ATP-consuming lipogenesis to restore cellular energy balance. In terms of biological role, precursor of the transcription factor form (Processed sterol regulatory element-binding protein 2), which is embedded in the endoplasmic reticulum membrane. Low sterol concentrations promote processing of this form, releasing the transcription factor form that translocates into the nucleus and activates transcription of genes involved in cholesterol biosynthesis. Key transcription factor that regulates expression of genes involved in cholesterol biosynthesis. Binds to the sterol regulatory element 1 (SRE-1) (5'-ATCACCCCAC-3'). Has dual sequence specificity binding to both an E-box motif (5'-ATCACGTGA-3') and to SRE-1 (5'-ATCACCCCAC-3'). Regulates transcription of genes related to cholesterol synthesis pathway. In Mus musculus (Mouse), this protein is Sterol regulatory element-binding protein 2.